Consider the following 323-residue polypeptide: Aldo-keto reductase family 1 member C4 (323 aa).

NADP(+)-binding positions include 20 to 24 (GFGTY) and D50. The active-site Proton donor is Y55. H117 is a substrate binding site. NADP(+) contacts are provided by residues 166-167 (SN), Q190, 216-221 (HSALGT), and 270-280 (KSYNEQRIREN).

It belongs to the aldo/keto reductase family. As to quaternary structure, monomer. The N-terminus is blocked. Liver specific.

It is found in the cytoplasm. It localises to the cytosol. The enzyme catalyses a 3alpha-hydroxysteroid + NADP(+) = a 3-oxosteroid + NADPH + H(+). It catalyses the reaction a 3alpha-hydroxysteroid + NAD(+) = a 3-oxosteroid + NADH + H(+). The catalysed reaction is 5alpha-androstane-3alpha,17beta-diol + NADP(+) = 17beta-hydroxy-5alpha-androstan-3-one + NADPH + H(+). It carries out the reaction 5alpha-androstane-3beta,17beta-diol + NADP(+) = 17beta-hydroxy-5alpha-androstan-3-one + NADPH + H(+). The enzyme catalyses 5alpha-androstane-3alpha,17beta-diol + NAD(+) = 17beta-hydroxy-5alpha-androstan-3-one + NADH + H(+). It catalyses the reaction 17beta-estradiol + NADP(+) = estrone + NADPH + H(+). The catalysed reaction is 17beta-estradiol + NAD(+) = estrone + NADH + H(+). It carries out the reaction (20S)-hydroxypregn-4-en-3-one + NADP(+) = progesterone + NADPH + H(+). The enzyme catalyses (20S)-hydroxypregn-4-en-3-one + NAD(+) = progesterone + NADH + H(+). It catalyses the reaction androsterone + NADP(+) = 5alpha-androstan-3,17-dione + NADPH + H(+). The catalysed reaction is testosterone + NADP(+) = androst-4-ene-3,17-dione + NADPH + H(+). It carries out the reaction testosterone + NAD(+) = androst-4-ene-3,17-dione + NADH + H(+). The enzyme catalyses 3alpha-hydroxy-5alpha-androstane 17-O-(beta-D-glucuronate) + NADP(+) = 5alpha-dihydrotestosterone 17-O-(beta-D-glucuronate) + NADPH + H(+). It catalyses the reaction (3beta,5alpha,17beta)-3-hydroxy-androstan-17-yl sulfate + NADP(+) = 5alpha-dihydrotestosterone sulfate + NADPH + H(+). The catalysed reaction is 5alpha-androstane-3alpha,17beta-diol + NAD(+) = androsterone + NADH + H(+). It carries out the reaction chlordecone alcohol + NADP(+) = chlordecone + NADPH + H(+). It participates in steroid metabolism. Inhibited by nonsteroidal the anti-inflammatory drugs (NSAID) flufenamic. The oxidation reaction is inhibited by low micromolar concentrations of NADPH. Its function is as follows. Cytosolic aldo-keto reductase that catalyzes the NADH and NADPH-dependent reduction of ketosteroids to hydroxysteroids. Liver specific enzyme that acts as an NAD(P)(H)-dependent 3-, 17- and 20-ketosteroid reductase on the steroid nucleus and side chain. Displays the ability to catalyze both oxidation and reduction in vitro, but most probably acts as a reductase in vivo since the oxidase activity measured in vitro is inhibited by physiological concentration of NADPH. Acts preferentially as a 3-alpha-hydroxysteroid dehydrogenase (HSD) with a subsidiary 3-beta-HSD activity. Catalyzes efficiently the transformation of the potent androgen 5-alpha-dihydrotestosterone (5alpha-DHT or 17beta-hydroxy-5alpha-androstan-3-one) into the less active form, 5-alpha-androstan-3-alpha,17-beta-diol (3-alpha-diol). Catalyzes the reduction of estrone into 17beta-estradiol but with low efficiency. Metabolizes a broad spectrum of natural and synthetic therapeutic steroid and plays an important role in metabolism of androgens, estrogens, progestereone and conjugated steroids. Catalyzes the biotransformation of the pesticide chlordecone (kepone) to its corresponding alcohol leading to increased biliary excretion of the pesticide and concomitant reduction of its neurotoxicity since bile is the major excretory route. In Homo sapiens (Human), this protein is Aldo-keto reductase family 1 member C4 (AKR1C4).